The sequence spans 139 residues: Large ribosomal subunit protein bL17 (139 aa).

It belongs to the bacterial ribosomal protein bL17 family. As to quaternary structure, part of the 50S ribosomal subunit. Contacts protein L32.

This is Large ribosomal subunit protein bL17 from Cereibacter sphaeroides (strain ATCC 17025 / ATH 2.4.3) (Rhodobacter sphaeroides).